Here is a 360-residue protein sequence, read N- to C-terminus: Protein Wnt-2 (360 aa).

A signal peptide spans 1–25; sequence MNAPLAGIWPWLPLLLTWLAPEVSS. 11 disulfides stabilise this stretch: Cys76–Cys87, Cys127–Cys135, Cys137–Cys157, Cys206–Cys220, Cys208–Cys215, Cys278–Cys309, Cys294–Cys304, Cys308–Cys348, Cys324–Cys339, Cys326–Cys336, and Cys331–Cys332. Ser212 carries the O-palmitoleoyl serine; by PORCN lipid modification. An N-linked (GlcNAc...) asparagine glycan is attached at Asn295.

The protein belongs to the Wnt family. Post-translationally, palmitoleoylation is required for efficient binding to frizzled receptors. Depalmitoleoylation leads to Wnt signaling pathway inhibition.

The protein localises to the secreted. The protein resides in the extracellular space. Its subcellular location is the extracellular matrix. Its function is as follows. Ligand for members of the frizzled family of seven transmembrane receptors. Functions in the canonical Wnt signaling pathway that results in activation of transcription factors of the TCF/LEF family. Functions as a upstream regulator of FGF10 expression. Plays an important role in embryonic lung development. May contribute to embryonic brain development by regulating the proliferation of dopaminergic precursors and neurons. This chain is Protein Wnt-2 (WNT2), found in Loxodonta africana (African elephant).